The sequence spans 236 residues: MRMQLTAVLAASLLAGCQNQAFREIGQAPSMSPIGSGLQYTQAPQLAAYPKQPHQMTAGYSLWNDQQAALFKDARAINVGDILTVDIQIDDKASFNNETDRSRTNSSGFNLGASGESQTSDFEWSGNLKYGSNIKTEGDGKTERSEKLRLLVAAVVTGVLENGNLLISGSQEVRVNHELRILNVAGIVRPRDVDADNIISYDRIAEARISYGGRGRLMEVQQPPWGQQVVDLVSPI.

The first 16 residues, Met-1–Gly-16, serve as a signal peptide directing secretion. A lipid anchor (N-palmitoyl cysteine) is attached at Cys-17. Cys-17 is lipidated: S-diacylglycerol cysteine.

The protein belongs to the FlgH family. In terms of assembly, the basal body constitutes a major portion of the flagellar organelle and consists of four rings (L,P,S, and M) mounted on a central rod.

It is found in the cell outer membrane. It localises to the bacterial flagellum basal body. Its function is as follows. Assembles around the rod to form the L-ring and probably protects the motor/basal body from shearing forces during rotation. This Sinorhizobium fredii (strain NBRC 101917 / NGR234) protein is Flagellar L-ring protein.